Here is a 116-residue protein sequence, read N- to C-terminus: UPF0134 protein MPN_038 (116 aa).

The protein belongs to the UPF0134 family.

The chain is UPF0134 protein MPN_038 from Mycoplasma pneumoniae (strain ATCC 29342 / M129 / Subtype 1) (Mycoplasmoides pneumoniae).